The primary structure comprises 190 residues: Small ribosomal subunit protein uS7 (190 aa).

Residue T2 is modified to N-acetylthreonine.

The protein belongs to the universal ribosomal protein uS7 family. Component of the small ribosomal subunit. Part of the small subunit (SSU) processome, composed of more than 70 proteins and the RNA chaperone small nucleolar RNA (snoRNA) U3.

It localises to the cytoplasm. The protein resides in the nucleus. It is found in the nucleolus. In terms of biological role, component of the small ribosomal subunit. The ribosome is a large ribonucleoprotein complex responsible for the synthesis of proteins in the cell. Part of the small subunit (SSU) processome, first precursor of the small eukaryotic ribosomal subunit. During the assembly of the SSU processome in the nucleolus, many ribosome biogenesis factors, an RNA chaperone and ribosomal proteins associate with the nascent pre-rRNA and work in concert to generate RNA folding, modifications, rearrangements and cleavage as well as targeted degradation of pre-ribosomal RNA by the RNA exosome. This Dictyostelium discoideum (Social amoeba) protein is Small ribosomal subunit protein uS7 (rps5).